The chain runs to 391 residues: Phosphoglycerate kinase (391 aa).

Substrate-binding positions include 21–23 (DLN), Arg-36, 59–62 (HLGR), Arg-113, and Arg-146. Residues Lys-197, Glu-319, and 345–348 (GGDT) contribute to the ATP site.

This sequence belongs to the phosphoglycerate kinase family. Monomer.

It localises to the cytoplasm. It carries out the reaction (2R)-3-phosphoglycerate + ATP = (2R)-3-phospho-glyceroyl phosphate + ADP. It functions in the pathway carbohydrate degradation; glycolysis; pyruvate from D-glyceraldehyde 3-phosphate: step 2/5. The protein is Phosphoglycerate kinase of Shewanella sp. (strain W3-18-1).